The chain runs to 160 residues: Transcription antitermination protein NusB (160 aa).

This sequence belongs to the NusB family.

Involved in transcription antitermination. Required for transcription of ribosomal RNA (rRNA) genes. Binds specifically to the boxA antiterminator sequence of the ribosomal RNA (rrn) operons. The polypeptide is Transcription antitermination protein NusB (Salinibacter ruber (strain DSM 13855 / M31)).